A 616-amino-acid polypeptide reads, in one-letter code: MALLQISEPGLSAAPHQRRLAAGIDLGTTNSLVATVRSGQAETLADEQGHHLLPSVVRYQAGGHIVGAEAREQAADDPLNTVSSIKRMMGRSLADVQARYPHLPYQMHASESGMPQLATAAGSVNPIQVSADILAALSARAQAALGGELDGVVITVPAYFDDAQRQGTKDAARLAGLHVLRLLNEPTAAAIAYGLDSAQEGVIAVYDLGGGTFDISILRLSRGVFEVLATGGDSALGGDDFDHLLADWLREQAGLRDRSDAGLARRFLDAAVAAKIALSTQQETTVCVGDWQGEVSRDQLDALIAPLVKRTLLACHRTLKDAGVTRDEVLEVVMVGGSTRVPLVRTQVGDFFGRQPLTTIDPDRVVAIGAAIQADILVGNKPDADMLLLDVIPLSLGLETMGGLVEKVIPRNTTIPVARAQEFTTFKDGQTAMMIHVLQGERELVQDNRSLARFTLRGIPPLSAGGAHIRVTFQVDADGLLSVTAMEKSTGVQAAIQVKPSYGLSEDEIVGMLKDSMANAEGDLSARMLAEQKVEAARVLESLHGALQQDSALLGEQELAAIRQAQTALQAAADGDETSAIEAAIKVLDAQTQEFAARRMDSSIRRALAGHSVDEV.

It belongs to the heat shock protein 70 family.

Functionally, chaperone involved in the maturation of iron-sulfur cluster-containing proteins. Has a low intrinsic ATPase activity which is markedly stimulated by HscB. Involved in the maturation of IscU. In Edwardsiella ictaluri (strain 93-146), this protein is Chaperone protein HscA.